Here is a 97-residue protein sequence, read N- to C-terminus: Aspartyl/glutamyl-tRNA(Asn/Gln) amidotransferase subunit C (97 aa).

The protein belongs to the GatC family. As to quaternary structure, heterotrimer of A, B and C subunits.

It carries out the reaction L-glutamyl-tRNA(Gln) + L-glutamine + ATP + H2O = L-glutaminyl-tRNA(Gln) + L-glutamate + ADP + phosphate + H(+). The enzyme catalyses L-aspartyl-tRNA(Asn) + L-glutamine + ATP + H2O = L-asparaginyl-tRNA(Asn) + L-glutamate + ADP + phosphate + 2 H(+). Allows the formation of correctly charged Asn-tRNA(Asn) or Gln-tRNA(Gln) through the transamidation of misacylated Asp-tRNA(Asn) or Glu-tRNA(Gln) in organisms which lack either or both of asparaginyl-tRNA or glutaminyl-tRNA synthetases. The reaction takes place in the presence of glutamine and ATP through an activated phospho-Asp-tRNA(Asn) or phospho-Glu-tRNA(Gln). The chain is Aspartyl/glutamyl-tRNA(Asn/Gln) amidotransferase subunit C from Sulfolobus acidocaldarius (strain ATCC 33909 / DSM 639 / JCM 8929 / NBRC 15157 / NCIMB 11770).